Consider the following 528-residue polypeptide: Nucleoporin ASM4 (528 aa).

An FG 1 repeat occupies 2–3 (FG). Positions 23–50 (TTQMFQSQSQLQPQPQPQPQQQQQHLQF) are enriched in low complexity. Disordered regions lie at residues 23–64 (TTQM…FGNS) and 88–144 (IKNG…SMNA). Composition is skewed to polar residues over residues 51 to 64 (NGSSDASSLRFGNS) and 97 to 108 (QHGQGNNPSWVN). The FG 2 repeat unit spans residues 61-62 (FG). Positions 110 to 125 (PKKRFTPHTVIRRKTT) are enriched in basic residues. The span at 127–141 (QNSSSDINQNDDSSS) shows a compositional bias: low complexity. FG repeat units lie at residues 195–196 (FG), 274–275 (FG), and 291–292 (FG). The region spanning 265 to 394 (SSSLSAIIVF…IPYSKNAVEQ (130 aa)) is the RRM Nup35-type domain. Phosphoserine occurs at positions 458 and 464. A coiled-coil region spans residues 490–510 (NLLRNLESKMRQQEAKYRNNE). One copy of the FG 6 repeat lies at 523–524 (FG).

In terms of assembly, component of the nuclear pore complex (NPC). NPC constitutes the exclusive means of nucleocytoplasmic transport. NPCs allow the passive diffusion of ions and small molecules and the active, nuclear transport receptor-mediated bidirectional transport of macromolecules such as proteins, RNAs, ribonucleoparticles (RNPs), and ribosomal subunits across the nuclear envelope. Due to its 8-fold rotational symmetry, all subunits are present with 8 copies or multiples thereof. ASM4 may form a subcomplex with NUP53, NDC1, and NUP170. Post-translationally, phosphorylated by CDC28.

It localises to the nucleus. Its subcellular location is the nuclear pore complex. It is found in the nucleus membrane. Its function is as follows. Functions as a component of the nuclear pore complex (NPC). NPC components, collectively referred to as nucleoporins (NUPs), can play the role of both NPC structural components and of docking or interaction partners for transiently associated nuclear transport factors. Active directional transport is assured by both, a Phe-Gly (FG) repeat affinity gradient for these transport factors across the NPC and a transport cofactor concentration gradient across the nuclear envelope (GSP1 and GSP2 GTPases associated predominantly with GTP in the nucleus, with GDP in the cytoplasm). May have a mitosis control function. In Saccharomyces cerevisiae (strain ATCC 204508 / S288c) (Baker's yeast), this protein is Nucleoporin ASM4 (ASM4).